A 691-amino-acid polypeptide reads, in one-letter code: Elongation factor G (691 aa).

The region spanning 8-282 (ERVRNIGIAA…AVVDYLPAPI (275 aa)) is the tr-type G domain. Residues 17–24 (AHIDAGKT), 81–85 (DTPGH), and 135–138 (NKMD) contribute to the GTP site.

It belongs to the TRAFAC class translation factor GTPase superfamily. Classic translation factor GTPase family. EF-G/EF-2 subfamily.

It is found in the cytoplasm. Functionally, catalyzes the GTP-dependent ribosomal translocation step during translation elongation. During this step, the ribosome changes from the pre-translocational (PRE) to the post-translocational (POST) state as the newly formed A-site-bound peptidyl-tRNA and P-site-bound deacylated tRNA move to the P and E sites, respectively. Catalyzes the coordinated movement of the two tRNA molecules, the mRNA and conformational changes in the ribosome. The chain is Elongation factor G from Thermosynechococcus vestitus (strain NIES-2133 / IAM M-273 / BP-1).